An 82-amino-acid chain; its full sequence is Small ribosomal subunit protein bS18 (82 aa).

The protein belongs to the bacterial ribosomal protein bS18 family. As to quaternary structure, part of the 30S ribosomal subunit. Forms a tight heterodimer with protein bS6.

In terms of biological role, binds as a heterodimer with protein bS6 to the central domain of the 16S rRNA, where it helps stabilize the platform of the 30S subunit. The chain is Small ribosomal subunit protein bS18 from Rhizobium meliloti (strain 1021) (Ensifer meliloti).